The chain runs to 410 residues: Probable intron-encoded endonuclease bI1 (410 aa).

The COB exon 1 encoded stretch occupies residues 1–131; sequence MRLLKTHPIL…VLMMAIAFLG (131 aa). 3 helical membrane-spanning segments follow: residues 32-52, 75-95, and 112-132; these read FGSL…FLAM, GWLI…FVYL, and LLWS…FLGF. Residues 132–410 are COB intron 1 encoded; it reads FNGQKYMCFY…KKNYIVKVIK (279 aa). A GIY-YIG domain is found at 196 to 286; it reads PFSGIYMIVN…LETLKPEYNI (91 aa).

The protein to endonucleases of group I introns of fungi and phage. Post-translationally, the mature protein may arise from proteolytic cleavage of an in-frame translation of COB exon 1 plus intron 1, containing the bI1 open reading frame.

It localises to the mitochondrion. It is found in the membrane. Mitochondrial DNA endonuclease involved in intron homing. In Mycosarcoma maydis (Corn smut fungus), this protein is Probable intron-encoded endonuclease bI1 (bI1).